Reading from the N-terminus, the 239-residue chain is uncharacterized protein (239 aa).

Positions 1–19 are cleaved as a signal peptide; the sequence is MPLLHRTIIFLQLLGTISS. Asparagine 44, asparagine 58, asparagine 72, asparagine 92, asparagine 109, asparagine 136, asparagine 172, asparagine 192, and asparagine 213 each carry an N-linked (GlcNAc...) asparagine glycan.

The protein localises to the secreted. This is an uncharacterized protein from Caenorhabditis elegans.